The sequence spans 393 residues: Isocitrate dehydrogenase [NAD] subunit gamma 1, mitochondrial (393 aa).

The N-terminal 39 residues, 1–39 (MALKVAIAAGSAAKAIFKPALLCRPWEVLAAHEAPRRSI), are a transit peptide targeting the mitochondrion. Position 120 (T120) interacts with citrate. Phosphoserine is present on S130. N133 provides a ligand contact to citrate. Substrate contacts are provided by R136 and R167. K206 is modified (N6-acetyllysine). K226 bears the N6-succinyllysine mark. D254 is a substrate binding site. D254 lines the Mn(2+) pocket. Positions 312, 313, and 324 each coordinate ADP.

It belongs to the isocitrate and isopropylmalate dehydrogenases family. In terms of assembly, heterooligomer of subunits alpha (IDH3A), beta (IDH3B), and gamma (IDH3G) in the apparent ratio of 2:1:1. The heterodimer containing one IDH3A and one IDH3B subunit and the heterodimer containing one IDH3A and one IDH3G subunit assemble into a heterotetramer (which contains two subunits of IDH3A, one of IDH3B and one of IDH3G) and further into the heterooctamer. Requires Mg(2+) as cofactor. Mn(2+) is required as a cofactor.

The protein localises to the mitochondrion. Its activity is regulated as follows. The heterotetramer and the heterodimer composed of IDH3A and IDH3G subunits can be allosterically activated by citrate (CIT) or/and ADP, and the two activators can act independently or synergistically. The heterodimer composed of IDH3A and IDH3B subunits cannot be allosterically regulated and the allosteric regulation of the heterotetramer is through the IDH3G subunit and not the IDH3B subunit. The IDH3G subunit contains the allosteric site which consists of a CIT-binding site and an ADP-binding site, and the binding of CIT and ADP causes conformational changes at the allosteric site which are transmitted to the active site in the catalytic subunit (IDH3A) through a cascade of conformational changes at the heterodimer interface, leading to stabilization of the isocitrate-binding at the active site and thus activation of the enzyme. ATP can activate the heterotetramer and the heterodimer composed of IDH3A and IDH3G subunits at low concentrations but inhibits their activities at high concentrations, whereas ATP exhibits only inhibitory effect on the heterodimer composed of IDH3A and IDH3B subunits. Its function is as follows. Regulatory subunit which plays a role in the allosteric regulation of the enzyme catalyzing the decarboxylation of isocitrate (ICT) into alpha-ketoglutarate. The heterodimer composed of the alpha (IDH3A) and beta (IDH3B) subunits and the heterodimer composed of the alpha (IDH3A) and gamma (IDH3G) subunits, have considerable basal activity but the full activity of the heterotetramer (containing two subunits of IDH3A, one of IDH3B and one of IDH3G) requires the assembly and cooperative function of both heterodimers. In Rattus norvegicus (Rat), this protein is Isocitrate dehydrogenase [NAD] subunit gamma 1, mitochondrial (Idh3g).